The sequence spans 1085 residues: KN motif and ankyrin repeat domain-containing protein 2 (1085 aa).

Positions 136-145 are enriched in basic and acidic residues; that stretch reads KLEEEKDGRR. Positions 136–192 are disordered; it reads KLEEEKDGRRFSNLGSMHSSMAGSNTSLSSAHSFNRAQGGGSYTPMSSGLSTPVSPT. 2 stretches are compositionally biased toward polar residues: residues 148-171 and 179-189; these read NLGSMHSSMAGSNTSLSSAHSFNR and TPMSSGLSTPV. Residues 196 to 216 are a coiled coil; that stretch reads LQHVREQMAVALRKIRELEEQ. Positions 273-295 are disordered; sequence NGAGAANKATGSLSPTTPGSLQD. Residues 281–295 are compositionally biased toward polar residues; that stretch reads ATGSLSPTTPGSLQD. Positions 356–383 form a coiled coil; it reads VGLLEVQLRKTMQELQSAQQQVEAAQKE. Disordered regions lie at residues 557-736, 752-791, and 798-817; these read RKAD…SNVQ, TTTQTQFTSAKPQQEASQSKTADLTAQKGATHSTDGSAKQ, and TTKPAADTATPPTNKQTDSL. Residues 589–600 are compositionally biased toward acidic residues; it reads SSSESSEDESDA. Over residues 601 to 611 the composition is skewed to basic and acidic residues; it reads SEYHEATEKLP. A compositionally biased stretch (polar residues) spans 614–648; the sequence is ATPQSLVSSCIPQLASETPATQTAQHSTAQIPTNH. Residues 649 to 668 show a composition bias toward low complexity; the sequence is TPAAQTTSQSHTTDATTQQH. Composition is skewed to polar residues over residues 706–736 and 760–788; these read NPPSTATSLEQNSVQLSSATQQSKATDSNVQ and SAKPQQEASQSKTADLTAQKGATHSTDGS. The span at 798 to 810 shows a compositional bias: low complexity; sequence TTKPAADTATPPT. 5 ANK repeats span residues 895-925, 929-962, 967-996, 1000-1030, and 1034-1063; these read NGNTALHYTVSHSNFPVVKLLLDTGLCNADK, AGYTAIMLTALAAFSSDSDLQTVLQLLRTGDVNA, AGQTALMLAVSHGRGDMVKALLACGAQVNL, DGSTALMCACEHGHVDIVRQLLSVPGCDATL, and DGSTALSIALEASQNDIAVLLYAHLNFAKP. The interval 1064–1085 is disordered; the sequence is PSPVSPKSPILGSSPPSSSELK. The segment covering 1070–1085 has biased composition (low complexity); sequence KSPILGSSPPSSSELK.

It is found in the cytoplasm. The protein resides in the mitochondrion. In terms of biological role, may be involved in different biological processes including transcription and apoptosis by sequestering specific proteins outside of the nucleus. Involved in actin stress fibers formation probably through its interaction with ARHGDIA and the regulation of the Rho signaling pathway. May thereby play a role in cell adhesion and migration, regulating for instance podocytes migration during development of the kidney. The protein is KN motif and ankyrin repeat domain-containing protein 2 (kank2) of Danio rerio (Zebrafish).